Reading from the N-terminus, the 321-residue chain is o-succinylbenzoate synthase (321 aa).

Lys110 acts as the Proton donor in catalysis. Asp138, Glu165, and Asp188 together coordinate Mg(2+). The Proton acceptor role is filled by Lys212.

It belongs to the mandelate racemase/muconate lactonizing enzyme family. MenC type 1 subfamily. A divalent metal cation serves as cofactor.

It catalyses the reaction (1R,6R)-6-hydroxy-2-succinyl-cyclohexa-2,4-diene-1-carboxylate = 2-succinylbenzoate + H2O. It functions in the pathway quinol/quinone metabolism; 1,4-dihydroxy-2-naphthoate biosynthesis; 1,4-dihydroxy-2-naphthoate from chorismate: step 4/7. Its pathway is quinol/quinone metabolism; menaquinone biosynthesis. Its function is as follows. Converts 2-succinyl-6-hydroxy-2,4-cyclohexadiene-1-carboxylate (SHCHC) to 2-succinylbenzoate (OSB). The protein is o-succinylbenzoate synthase of Mycolicibacterium smegmatis (strain ATCC 700084 / mc(2)155) (Mycobacterium smegmatis).